Reading from the N-terminus, the 568-residue chain is MQSKGNLGLLMLILTGYLFIFTGSSFGSAYLLEVPVWESNCLSFSFSFLLDNVSMIFVGTVLVISGSVATYCKWYMAEELYYNRFMGLVWLFVLSMVFMILVPNLLMLLIGWDGLGLTSFLLVAYYQNNKSLSAAMLTALTNRIGDVLVLISISIFLSEGGWLIYSYHPVQMWLNLGFMVVFAGMTKSAQMPFCAWLPAAMAAPTPVSSLVHSSTLVTAGVYLVLRSFYIISSNPYVTQVLMILSLFTLVLAGSSAVFAFDLKKVIALSTLSQLSLMMFSISILLPSVAFFHLVTHAVFKALLFLGAGGVIHSNQSIQDIRGLSSLWQGLPVSMGAMSVAIVSLSGAPFMSGFFSKDLMIELSMMDSSVTYGCYLLELLGLIFTSFYSARIVFSVMLGSNYVNNSTLRINEHLNMQTPFLSLYIGAIILGVVLGSKMESFGFVVVLENYESLSVFFIPFAGLILWRGVISKLGSSPWSSAKSLSFFLSMWFMESLTSHPGKVIFFKGSSTVAQSLDQGWLELLGPQGVHAGLGQFSCLNEIVQKNYFTYQLVVWGLLVAGGVSLIIFM.

A run of 14 helical transmembrane segments spans residues 7–27 (LGLL…SSFG), 44–64 (FSFS…VLVI), 90–110 (WLFV…MLLI), 144–164 (IGDV…GWLI), 165–185 (YSYH…FAGM), 210–232 (LVHS…YIIS), 240–260 (VLMI…VFAF), 274–294 (LSLM…FHLV), 297–317 (AVFK…NQSI), 334–354 (MGAM…SGFF), 378–398 (LLGL…VMLG), 426–446 (AIIL…VVVL), 452–472 (LSVF…ISKL), and 547–567 (FTYQ…LIIF).

The protein belongs to the complex I subunit 5 family.

Its subcellular location is the mitochondrion inner membrane. It catalyses the reaction a ubiquinone + NADH + 5 H(+)(in) = a ubiquinol + NAD(+) + 4 H(+)(out). In terms of biological role, core subunit of the mitochondrial membrane respiratory chain NADH dehydrogenase (Complex I) that is believed to belong to the minimal assembly required for catalysis. Complex I functions in the transfer of electrons from NADH to the respiratory chain. The immediate electron acceptor for the enzyme is believed to be ubiquinone. In Mytilus edulis (Blue mussel), this protein is NADH-ubiquinone oxidoreductase chain 5 (ND5).